A 255-amino-acid polypeptide reads, in one-letter code: 5'-nucleotidase SurE (255 aa).

4 residues coordinate a divalent metal cation: aspartate 8, aspartate 9, serine 40, and asparagine 92.

It belongs to the SurE nucleotidase family. A divalent metal cation is required as a cofactor.

The protein resides in the cytoplasm. The enzyme catalyses a ribonucleoside 5'-phosphate + H2O = a ribonucleoside + phosphate. In terms of biological role, nucleotidase that shows phosphatase activity on nucleoside 5'-monophosphates. This is 5'-nucleotidase SurE from Brucella canis (strain ATCC 23365 / NCTC 10854 / RM-666).